The sequence spans 605 residues: Aspartate--tRNA(Asp/Asn) ligase (605 aa).

Glu-183 contacts L-aspartate. Residues 207–210 (QLYK) are aspartate. Residue Arg-229 participates in L-aspartate binding. ATP is bound by residues 229 to 231 (RDE) and Gln-238. An L-aspartate-binding site is contributed by His-456. Glu-490 contributes to the ATP binding site. Arg-497 lines the L-aspartate pocket. 542 to 545 (GLDR) lines the ATP pocket.

Belongs to the class-II aminoacyl-tRNA synthetase family. Type 1 subfamily. In terms of assembly, homodimer.

The protein localises to the cytoplasm. The catalysed reaction is tRNA(Asx) + L-aspartate + ATP = L-aspartyl-tRNA(Asx) + AMP + diphosphate. Its function is as follows. Aspartyl-tRNA synthetase with relaxed tRNA specificity since it is able to aspartylate not only its cognate tRNA(Asp) but also tRNA(Asn). Reaction proceeds in two steps: L-aspartate is first activated by ATP to form Asp-AMP and then transferred to the acceptor end of tRNA(Asp/Asn). This is Aspartate--tRNA(Asp/Asn) ligase from Heliobacterium modesticaldum (strain ATCC 51547 / Ice1).